The following is a 182-amino-acid chain: Putative manganese efflux pump MntP (182 aa).

The next 6 membrane-spanning stretches (helical) occupy residues T6–T26, L37–S57, A59–G79, S104–I126, L131–A149, and M164–L181.

This sequence belongs to the MntP (TC 9.B.29) family.

The protein localises to the cell inner membrane. Functionally, probably functions as a manganese efflux pump. The protein is Putative manganese efflux pump MntP of Syntrophobacter fumaroxidans (strain DSM 10017 / MPOB).